Reading from the N-terminus, the 186-residue chain is Ribosome-recycling factor (186 aa).

Belongs to the RRF family.

The protein localises to the cytoplasm. Its function is as follows. Responsible for the release of ribosomes from messenger RNA at the termination of protein biosynthesis. May increase the efficiency of translation by recycling ribosomes from one round of translation to another. The sequence is that of Ribosome-recycling factor from Allorhizobium ampelinum (strain ATCC BAA-846 / DSM 112012 / S4) (Agrobacterium vitis (strain S4)).